Consider the following 475-residue polypeptide: GlcNAc-binding protein A (475 aa).

The signal sequence occupies residues 1 to 27; the sequence is MPKLTQLSLVTLALTAGSTLVSQTASA. Residues 28–195 form the Chitin-binding type-4 domain; sequence HGYVVSPESR…SFYNAIDVNF (168 aa). Residues 426–468 form the Chitin-binding type-3 domain; that stretch reads AGTKVLQPKTGKVYQCKPWPYNGYCVQWSPTATGFEPGIGNSW.

This sequence belongs to the GbpA family.

It is found in the secreted. In terms of biological role, probably interacts with GlcNAc residues. May promote attachment to both epithelial cell surfaces and chitin. The chain is GlcNAc-binding protein A from Shewanella oneidensis (strain ATCC 700550 / JCM 31522 / CIP 106686 / LMG 19005 / NCIMB 14063 / MR-1).